The chain runs to 383 residues: 1-deoxy-D-xylulose 5-phosphate reductoisomerase (383 aa).

NADPH-binding residues include threonine 10, glycine 11, serine 12, isoleucine 13, glycine 36, lysine 37, asparagine 38, and asparagine 122. A 1-deoxy-D-xylulose 5-phosphate-binding site is contributed by lysine 123. Glutamate 124 provides a ligand contact to NADPH. Aspartate 148 contacts Mn(2+). 1-deoxy-D-xylulose 5-phosphate contacts are provided by serine 149, glutamate 150, serine 174, and histidine 197. Glutamate 150 lines the Mn(2+) pocket. Glycine 203 contributes to the NADPH binding site. Positions 210, 215, 216, and 219 each coordinate 1-deoxy-D-xylulose 5-phosphate. Residue glutamate 219 participates in Mn(2+) binding.

The protein belongs to the DXR family. Mg(2+) serves as cofactor. Mn(2+) is required as a cofactor.

The catalysed reaction is 2-C-methyl-D-erythritol 4-phosphate + NADP(+) = 1-deoxy-D-xylulose 5-phosphate + NADPH + H(+). It functions in the pathway isoprenoid biosynthesis; isopentenyl diphosphate biosynthesis via DXP pathway; isopentenyl diphosphate from 1-deoxy-D-xylulose 5-phosphate: step 1/6. In terms of biological role, catalyzes the NADPH-dependent rearrangement and reduction of 1-deoxy-D-xylulose-5-phosphate (DXP) to 2-C-methyl-D-erythritol 4-phosphate (MEP). The sequence is that of 1-deoxy-D-xylulose 5-phosphate reductoisomerase from Bacillus velezensis (strain DSM 23117 / BGSC 10A6 / LMG 26770 / FZB42) (Bacillus amyloliquefaciens subsp. plantarum).